A 395-amino-acid chain; its full sequence is Lipoyl synthase, mitochondrial (395 aa).

A mitochondrion-targeting transit peptide spans 1 to 24; it reads MVKLPSASRIRSLATVPSTATRAF. Cys-107, Cys-112, Cys-118, Cys-137, Cys-141, Cys-144, and Ser-357 together coordinate [4Fe-4S] cluster. The region spanning 122-346 is the Radical SAM core domain; the sequence is GKGNATATIM…KNVAEGMGFL (225 aa).

It belongs to the radical SAM superfamily. Lipoyl synthase family. [4Fe-4S] cluster serves as cofactor.

The protein resides in the mitochondrion. It catalyses the reaction [[Fe-S] cluster scaffold protein carrying a second [4Fe-4S](2+) cluster] + N(6)-octanoyl-L-lysyl-[protein] + 2 oxidized [2Fe-2S]-[ferredoxin] + 2 S-adenosyl-L-methionine + 4 H(+) = [[Fe-S] cluster scaffold protein] + N(6)-[(R)-dihydrolipoyl]-L-lysyl-[protein] + 4 Fe(3+) + 2 hydrogen sulfide + 2 5'-deoxyadenosine + 2 L-methionine + 2 reduced [2Fe-2S]-[ferredoxin]. It participates in protein modification; protein lipoylation via endogenous pathway; protein N(6)-(lipoyl)lysine from octanoyl-[acyl-carrier-protein]: step 2/2. Functionally, catalyzes the radical-mediated insertion of two sulfur atoms into the C-6 and C-8 positions of the octanoyl moiety bound to the lipoyl domains of lipoate-dependent enzymes, thereby converting the octanoylated domains into lipoylated derivatives. The polypeptide is Lipoyl synthase, mitochondrial (Cryptococcus neoformans var. neoformans serotype D (strain B-3501A) (Filobasidiella neoformans)).